Here is a 71-residue protein sequence, read N- to C-terminus: Large ribosomal subunit protein bL31 (71 aa).

The Zn(2+) site is built by cysteine 16, cysteine 18, cysteine 38, and cysteine 41.

Belongs to the bacterial ribosomal protein bL31 family. Type A subfamily. Part of the 50S ribosomal subunit. The cofactor is Zn(2+).

Binds the 23S rRNA. This Laribacter hongkongensis (strain HLHK9) protein is Large ribosomal subunit protein bL31.